We begin with the raw amino-acid sequence, 200 residues long: MFKGNVQGVGTVENIDKGAKFQSLHGVSLLPIDADLQSHDIIFPEDILEGVTSGELIAINGVRLTVVHTDKSIVRFDINDALELTTLGQLKVGDKVNIEKSFKFGDMTGGRSLSGIVTGVADIVEFIEKENNRQIWIEAPEHLTEFLVEKKYIGVDGVYLVIDAIENNRFCINLLLETDMRWYKKGSKVNIEIPDIAGNW.

Lumazine-binding repeat units lie at residues 1-111 and 112-200; these read MFKG…TGGR and SLSG…AGNW.

As to quaternary structure, monomer.

It is found in the cytoplasm. Blue fluorescence protein (BFP) that can bind 6,7-dimethyl-8-ribityllumazine, riboflavin, and 6-methyl-7-oxo-8-ribityllumazine as a bound fluorophore. Has no riboflavin-synthase activity. The polypeptide is Blue fluorescence protein (Aliivibrio fischeri (Vibrio fischeri)).